Here is a 74-residue protein sequence, read N- to C-terminus: MSAGTKASELRELGDEELLNKLREAKEELFNLRFQAATGQLENHGRLKSVRKDIARIYTLMRERELGIETVESA.

The protein belongs to the universal ribosomal protein uL29 family.

This Streptomyces griseus subsp. griseus (strain JCM 4626 / CBS 651.72 / NBRC 13350 / KCC S-0626 / ISP 5235) protein is Large ribosomal subunit protein uL29.